The chain runs to 414 residues: MIKAVKGTRDLLPPSTEVWNRVEQVARAIFRAYNYHEIRTPIFEETQLFSRGVGTETDIVTKEMYTFEDRDGSSLTLRPENTASVIRAYIEHRLDQRPGVQKLYYIGPMFRRERPQKGRYRQFFQIGAEAIGSESPVVDAEVIELVVEILKGVGLSGFKLLINSVGDHNCRPQYVEKLKAELKDKAAGMCGDCQRRAETNPLRVLDCKVEADQPIIDALPSIVDYLCEPCRAHFEAVKSYLTDRGIEYEVRPRMVRGLDYYMRTTFEVVHGALGAQNSVLGGGRYDGLAESLGSRVHAPGIGFSIGEDRLVMSVEGDQPASQLDLCIAPLGEAAVRHAAILARDFRRSGHSVELVEGKLKRAMELANKFGARYTLIIGDNEIAAGRYALKNMATGEQVELTRDEIAARLDAASN.

The protein belongs to the class-II aminoacyl-tRNA synthetase family. As to quaternary structure, homodimer.

The protein localises to the cytoplasm. It catalyses the reaction tRNA(His) + L-histidine + ATP = L-histidyl-tRNA(His) + AMP + diphosphate + H(+). The protein is Histidine--tRNA ligase of Solibacter usitatus (strain Ellin6076).